The chain runs to 154 residues: S-ribosylhomocysteine lyase (154 aa).

Residues His58, His62, and Cys125 each contribute to the Fe cation site.

This sequence belongs to the LuxS family. As to quaternary structure, homodimer. Fe cation is required as a cofactor.

It carries out the reaction S-(5-deoxy-D-ribos-5-yl)-L-homocysteine = (S)-4,5-dihydroxypentane-2,3-dione + L-homocysteine. Its function is as follows. Involved in the synthesis of autoinducer 2 (AI-2) which is secreted by bacteria and is used to communicate both the cell density and the metabolic potential of the environment. The regulation of gene expression in response to changes in cell density is called quorum sensing. Catalyzes the transformation of S-ribosylhomocysteine (RHC) to homocysteine (HC) and 4,5-dihydroxy-2,3-pentadione (DPD). This chain is S-ribosylhomocysteine lyase, found in Dichelobacter nodosus (strain VCS1703A).